Consider the following 119-residue polypeptide: Protein TusC (119 aa).

The protein belongs to the DsrF/TusC family. As to quaternary structure, heterohexamer, formed by a dimer of trimers. The hexameric TusBCD complex contains 2 copies each of TusB, TusC and TusD. The TusBCD complex interacts with TusE.

It localises to the cytoplasm. Functionally, part of a sulfur-relay system required for 2-thiolation of 5-methylaminomethyl-2-thiouridine (mnm(5)s(2)U) at tRNA wobble positions. In Shigella boydii serotype 18 (strain CDC 3083-94 / BS512), this protein is Protein TusC.